We begin with the raw amino-acid sequence, 280 residues long: Energy-coupling factor transporter ATP-binding protein EcfA1 (280 aa).

Positions 6–244 (IECKNVVYKY…VPLMKNIGLD (239 aa)) constitute an ABC transporter domain. 43 to 50 (GHNGSGKS) contacts ATP.

The protein belongs to the ABC transporter superfamily. Energy-coupling factor EcfA family. Forms a stable energy-coupling factor (ECF) transporter complex composed of 2 membrane-embedded substrate-binding proteins (S component), 2 ATP-binding proteins (A component) and 2 transmembrane proteins (T component).

It localises to the cell membrane. Functionally, ATP-binding (A) component of a common energy-coupling factor (ECF) ABC-transporter complex. Unlike classic ABC transporters this ECF transporter provides the energy necessary to transport a number of different substrates. The polypeptide is Energy-coupling factor transporter ATP-binding protein EcfA1 (Clostridium novyi (strain NT)).